Here is a 479-residue protein sequence, read N- to C-terminus: Small ribosomal subunit protein bS1 (479 aa).

4 S1 motif domains span residues Gly36–Lys105, Asp123–Arg188, Gly209–Lys277, and Gly294–Lys363. The interval Thr429 to Ala466 is disordered. A compositionally biased stretch (low complexity) spans Ala437–Gly460.

It belongs to the bacterial ribosomal protein bS1 family. Binds uncharacterized protein MSMEG_2731/MSMEI_2664.

Binds mRNA, facilitating recognition of most mRNAs by the 30S ribosomal subunit during translation initiation. Plays a role in trans-translation; binds tmRNA (the product of the ssrA gene). Binds very poorly to pyrazinoic acid (POA), the active form of the prodrug pyrazinamide (PZA); POA does not disrupt trans-translation in this organism. M.smegmatis is resistant to the antibiotic PZA. In trans-translation Ala-aminoacylated transfer-messenger RNA (tmRNA, product of the ssrA gene; the 2 termini fold to resemble tRNA(Ala) while it encodes a short internal open reading frame (the tag peptide)) acts like a tRNA, entering the A-site of the ribosome and displacing the stalled mRNA (which is subsequently degraded). The ribosome then switches to translate the ORF on the tmRNA, the nascent peptide is terminated with the 'tag peptide' encoded by the tmRNA and thus targeted for degradation. This Mycolicibacterium smegmatis (strain ATCC 700084 / mc(2)155) (Mycobacterium smegmatis) protein is Small ribosomal subunit protein bS1 (rpsA).